Consider the following 96-residue polypeptide: Aspartyl/glutamyl-tRNA(Asn/Gln) amidotransferase subunit C (96 aa).

The protein belongs to the GatC family. In terms of assembly, heterotrimer of A, B and C subunits.

The catalysed reaction is L-glutamyl-tRNA(Gln) + L-glutamine + ATP + H2O = L-glutaminyl-tRNA(Gln) + L-glutamate + ADP + phosphate + H(+). The enzyme catalyses L-aspartyl-tRNA(Asn) + L-glutamine + ATP + H2O = L-asparaginyl-tRNA(Asn) + L-glutamate + ADP + phosphate + 2 H(+). Allows the formation of correctly charged Asn-tRNA(Asn) or Gln-tRNA(Gln) through the transamidation of misacylated Asp-tRNA(Asn) or Glu-tRNA(Gln) in organisms which lack either or both of asparaginyl-tRNA or glutaminyl-tRNA synthetases. The reaction takes place in the presence of glutamine and ATP through an activated phospho-Asp-tRNA(Asn) or phospho-Glu-tRNA(Gln). The chain is Aspartyl/glutamyl-tRNA(Asn/Gln) amidotransferase subunit C from Oceanobacillus iheyensis (strain DSM 14371 / CIP 107618 / JCM 11309 / KCTC 3954 / HTE831).